Here is a 280-residue protein sequence, read N- to C-terminus: uncharacterized protein (280 aa).

4 consecutive CBS domains span residues 10–67 (QNKK…GSKY), 90–146 (MEEN…KIDE), 154–209 (ITRD…DWAF), and 229–280 (MKRD…KYFA).

This is an uncharacterized protein from Methanocaldococcus jannaschii (strain ATCC 43067 / DSM 2661 / JAL-1 / JCM 10045 / NBRC 100440) (Methanococcus jannaschii).